The primary structure comprises 405 residues: N-methyltransferase nanE (405 aa).

Residues 238 to 239 (GG), aspartate 261, and 290 to 291 (HH) contribute to the S-adenosyl-L-methionine site.

This sequence belongs to the class I-like SAM-binding methyltransferase superfamily. Cation-independent O-methyltransferase family.

The protein operates within secondary metabolite biosynthesis. Functionally, N-methyltransferase; part of the gene cluster that mediates the biosynthesis of the benzazepine alkaloid nanangelenin A which contains an unprecedented 3,4-dihydro-1-benzazepine-2,5-dione-N-prenyl-N-acetoxy-anthranilamide scaffold. The first step of nanangelenin biosynthesis is catalyzed by the indoleamine 2,3-dioxygenase nanC which produces N-formyl-kynurenine through the catabolism of tryptophan. The two-module NRPS nanA then utilizes anthranilate (Ant) and L-kynurenine (L-Kyn) to assemble the dipeptide product nanangelenin B. The first adenylation domain of nanA (A1) loads anthranilate onto the T1 domain, while A2 loads kynurenine, generated through spontaneous nonenzymatic deformylation of the nanC-supplied N-formyl-kynurenine. The peptide bond formation between the tethered amino acids is catalyzed by the first condensation domain (C1) between anthranilate's carbonyl carbon and kynurenine's aliphatic primary amine. The second C domain (C2) catalyzes the final cyclization event between the aromatic amine of kynurenine and the tethered carbonyl carbon, yielding nanangelenin B. The terminal T3 domain enhances the catalytic efficiency of C2, suggesting the T2-tethered Ant-L-Kyn is transferred to T3 prior to cyclization by C2. Once released from nanA, nanangelenin B is then prenylated by the prenyltransferase nanD to form nanangelenin C. Nanangelenin C is then N-hydroxylated by the FAD-dependent monooxygenase nanF and further acetylated by the acetyltransferase nanB to yield nanangelenin F. Finally, the N-methyltransferase nanE methylates the amide nitrogen of 1-benzazepine to convert nanangelenin F into nanangelenin A. NanE is also able to methylate most of the intermediates of the pathway such as nanangelenin B and nanangelenin C to produce nanangelenin D and nanangelenin E, respectively. This is N-methyltransferase nanE from Aspergillus nanangensis.